A 408-amino-acid polypeptide reads, in one-letter code: UV excision repair protein RAD23 homolog B (408 aa).

The 79-residue stretch at 1–79 folds into the Ubiquitin-like domain; that stretch reads MLVTLKTLQQ…VVVMVTKPKA (79 aa). Positions 80–111 are enriched in low complexity; it reads VTTPAPATTQQSNSAATTTVSSSTAPAVTQAP. A disordered region spans residues 80–176; it reads VTTPAPATTQ…TSGDSSRSNL (97 aa). Positions 112-122 are enriched in pro residues; that stretch reads APAPASAPTPT. The span at 123-143 shows a compositional bias: low complexity; the sequence is PVSVTPAPTTASSEPAPASAA. Over residues 144–153 the composition is skewed to basic and acidic residues; sequence KQEKPAERPV. Over residues 154–174 the composition is skewed to low complexity; sequence ETPVATTPTSTDSTSGDSSRS. A phosphothreonine mark is found at threonine 155 and threonine 164. Serine 174 is subject to Phosphoserine. Residue threonine 186 is modified to Phosphothreonine. Residues 188–228 form the UBA 1 domain; the sequence is QSYENMVTEIMSMGYEREQVIAALRASFNNPDRAVEYLLMG. Serine 199 carries the post-translational modification Phosphoserine. Phosphotyrosine is present on tyrosine 202. The tract at residues 236-274 is disordered; it reads QAVVDPPPAASTGAPQSSVAAAAATTTATTTTTSSGGHP. The span at 255–268 shows a compositional bias: low complexity; the sequence is AAAAATTTATTTTT. One can recognise an STI1 domain in the interval 273–316; it reads HPLEFLRNQPQFQQMRQIIQQNPSLLPALLQQIGRENPQLLQQI. Residues 363–403 enclose the UBA 2 domain; that stretch reads PQEKEAIERLKALGFPEGLVIQAYFACEKNENLAANFLLQQ.

The protein belongs to the RAD23 family. In terms of assembly, component of the XPC complex composed of XPC, RAD23B and CETN2. Interacts with NGLY1 and PSMC1. Interacts with ATXN3. Interacts with PSMD4 and PSMC5. Interacts with AMFR. Interacts with VCP; the interaction is indirect and mediated by NGLY1.

The protein resides in the nucleus. It localises to the cytoplasm. Its function is as follows. Multiubiquitin chain receptor involved in modulation of proteasomal degradation. Binds to polyubiquitin chains. Proposed to be capable to bind simultaneously to the 26S proteasome and to polyubiquitinated substrates and to deliver ubiquitinated proteins to the proteasome. May play a role in endoplasmic reticulum-associated degradation (ERAD) of misfolded glycoproteins by association with PNGase and delivering deglycosylated proteins to the proteasome. In terms of biological role, involved in global genome nucleotide excision repair (GG-NER) by acting as component of the XPC complex. Cooperatively with CETN2 appears to stabilize XPC. May protect XPC from proteasomal degradation. Functionally, the XPC complex is proposed to represent the first factor bound at the sites of DNA damage and together with other core recognition factors, XPA, RPA and the TFIIH complex, is part of the pre-incision (or initial recognition) complex. The XPC complex recognizes a wide spectrum of damaged DNA characterized by distortions of the DNA helix such as single-stranded loops, mismatched bubbles or single-stranded overhangs. The orientation of XPC complex binding appears to be crucial for inducing a productive NER. XPC complex is proposed to recognize and to interact with unpaired bases on the undamaged DNA strand which is followed by recruitment of the TFIIH complex and subsequent scanning for lesions in the opposite strand in a 5'-to-3' direction by the NER machinery. Cyclobutane pyrimidine dimers (CPDs) which are formed upon UV-induced DNA damage esacpe detection by the XPC complex due to a low degree of structural perurbation. Instead they are detected by the UV-DDB complex which in turn recruits and cooperates with the XPC complex in the respective DNA repair. In vitro, the XPC:RAD23B dimer is sufficient to initiate NER; it preferentially binds to cisplatin and UV-damaged double-stranded DNA and also binds to a variety of chemically and structurally diverse DNA adducts. XPC:RAD23B contacts DNA both 5' and 3' of a cisplatin lesion with a preference for the 5' side. XPC:RAD23B induces a bend in DNA upon binding. XPC:RAD23B stimulates the activity of DNA glycosylases TDG and SMUG1. The protein is UV excision repair protein RAD23 homolog B (RAD23B) of Bos taurus (Bovine).